The following is a 284-amino-acid chain: 4-diphosphocytidyl-2-C-methyl-D-erythritol kinase (284 aa).

Lys-22 is an active-site residue. 104-114 contributes to the ATP binding site; sequence PVGAGLGGASS. The active site involves Asp-146.

The protein belongs to the GHMP kinase family. IspE subfamily.

The enzyme catalyses 4-CDP-2-C-methyl-D-erythritol + ATP = 4-CDP-2-C-methyl-D-erythritol 2-phosphate + ADP + H(+). It functions in the pathway isoprenoid biosynthesis; isopentenyl diphosphate biosynthesis via DXP pathway; isopentenyl diphosphate from 1-deoxy-D-xylulose 5-phosphate: step 3/6. In terms of biological role, catalyzes the phosphorylation of the position 2 hydroxy group of 4-diphosphocytidyl-2C-methyl-D-erythritol. The polypeptide is 4-diphosphocytidyl-2-C-methyl-D-erythritol kinase (Hydrogenobaculum sp. (strain Y04AAS1)).